A 492-amino-acid polypeptide reads, in one-letter code: MAQLGEQTLPGPETTVQIRVAIQEAEDLEDLEEEDEGTSARAAGDPARYLSPGWGSASEEEPSRGHSSATTSGGENDREDLEPEWRPPDEELIRKLVDQIEFYFSDENLEKDAFLLKHVRRNKLGYVSVKLLTSFKKVKHLTRDWRTTAHALKYSVTLELNEDHRKVRRTTPVPLFPNENLPSKMLLVYDLHLSPKLWALATPQKNGRVQEKVMEHLLKLFGTFGVISSVRILKPGRELPPDIRRISSRYSQVGTQECAIVEFEEVDAAIKAHEFMVTESQSKENMKAVLIGMKPPKKKPLKDKNHDDEATAGTHLSRSLNKRVEELQYMGDESSANSSSDPESNPTSPMAGRRHAASNKLSPSGHQNIFLSPNASPCSSPWSSPLAQRKGVSRKSPLAEEGRLNFSTSPEIFRKCMDYSSDSSITPSGSPWVRRRRQAEMGTQEKSPGASPLLSRRMQTADGLPVGVLRLPRGPDNTRGFHGGHERGRACV.

Residues 1-87 are disordered; it reads MAQLGEQTLP…REDLEPEWRP (87 aa). An N-acetylalanine modification is found at Ala2. A compositionally biased stretch (acidic residues) spans 24-37; the sequence is EAEDLEDLEEEDEG. Phosphoserine occurs at positions 56 and 58. A compositionally biased stretch (polar residues) spans 65 to 74; the sequence is GHSSATTSGG. Positions 86–177 constitute an HTH La-type RNA-binding domain; it reads RPPDEELIRK…RRTTPVPLFP (92 aa). Residues 184–296 form the RRM domain; the sequence is KMLLVYDLHL…KAVLIGMKPP (113 aa). The short motif at 186 to 193 is the Nuclear export signal element; the sequence is LLVYDLHL. Disordered regions lie at residues 292 to 398 and 466 to 492; these read GMKP…KSPL and VGVLRLPRGPDNTRGFHGGHERGRACV. A Nuclear localization signal motif is present at residues 296–302; sequence PKKKPLK. Residues 332 to 346 are compositionally biased toward low complexity; the sequence is DESSANSSSDPESNP. A compositionally biased stretch (polar residues) spans 359–386; the sequence is NKLSPSGHQNIFLSPNASPCSSPWSSPL. An SUZ-C domain is found at 427–485; the sequence is PSGSPWVRRRRQAEMGTQEKSPGASPLLSRRMQTADGLPVGVLRLPRGPDNTRGFHGGH. A compositionally biased stretch (basic and acidic residues) spans 483 to 492; it reads GGHERGRACV.

Interacts (via the HTH domain) with VIM/vimentin. Interacts (via C-terminus) with non-muscle myosin MYH10. Interacts (via C-terminus) with DHX9. As to expression, expressed in numerous tissues. Highest expression in heart and brain, intermediate in kidney, skeletal muscle and testis, lowest expression in testis (at protein level).

It is found in the cytoplasm. The protein localises to the nucleus. Functionally, regulates the coordinated translation of type I collagen alpha-1 and alpha-2 mRNAs, CO1A1 and CO1A2. Stabilizes mRNAs through high-affinity binding of a stem-loop structure in their 5' UTR. This regulation requires VIM and MYH10 filaments, and the helicase DHX9. This Mus musculus (Mouse) protein is La-related protein 6 (Larp6).